A 124-amino-acid polypeptide reads, in one-letter code: Mitochondrial import inner membrane translocase subunit TIM16 (124 aa).

Positions 58-109 are J-like; it reads EAQQILNISKLSPEEVQNYEHLFKVNDKSVGDSFYLQSKVVRAKERLDEELQ. Serine 69 is subject to Phosphoserine.

It belongs to the TIM16/PAM16 family. In terms of assembly, probable component of the PAM complex at least composed of a mitochondrial HSP70 protein, GRPEL1 or GRPEL2, TIMM44, TIMM16/PAM16 and TIMM14/DNAJC19. Interacts with DNAJC19. Directly interacts with DNAJC15; this interaction counteracts DNAJC15-dependent stimulation of HSPA9 ATPase activity. Associates with the TIM23 complex.

It is found in the mitochondrion inner membrane. Regulates ATP-dependent protein translocation into the mitochondrial matrix. Inhibits DNAJC19 stimulation of HSPA9/Mortalin ATPase activity. The chain is Mitochondrial import inner membrane translocase subunit TIM16 (Magmas-ps1) from Rattus norvegicus (Rat).